The following is a 245-amino-acid chain: Probable proteasome subunit alpha type-2 (245 aa).

The protein belongs to the peptidase T1A family. The 26S proteasome consists of a 20S proteasome core and two 19S regulatory subunits. The 20S proteasome core is composed of 28 subunits that are arranged in four stacked rings, resulting in a barrel-shaped structure. The two end rings are each formed by seven alpha subunits, and the two central rings are each formed by seven beta subunits. The catalytic chamber with the active sites is on the inside of the barrel.

It is found in the cytoplasm. The protein localises to the nucleus. In terms of biological role, the proteasome is a multicatalytic proteinase complex which is characterized by its ability to cleave peptides with Arg, Phe, Tyr, Leu, and Glu adjacent to the leaving group at neutral or slightly basic pH. The proteasome has an ATP-dependent proteolytic activity. This Schizosaccharomyces pombe (strain 972 / ATCC 24843) (Fission yeast) protein is Probable proteasome subunit alpha type-2 (pre8).